The following is a 424-amino-acid chain: Serine--tRNA ligase (424 aa).

231-233 provides a ligand contact to L-serine; the sequence is TAE. 262–264 lines the ATP pocket; the sequence is RSE. Glu285 contributes to the L-serine binding site. Position 349–352 (349–352) interacts with ATP; sequence EISS. Ser385 is an L-serine binding site.

This sequence belongs to the class-II aminoacyl-tRNA synthetase family. Type-1 seryl-tRNA synthetase subfamily. Homodimer. The tRNA molecule binds across the dimer.

It localises to the cytoplasm. The enzyme catalyses tRNA(Ser) + L-serine + ATP = L-seryl-tRNA(Ser) + AMP + diphosphate + H(+). It carries out the reaction tRNA(Sec) + L-serine + ATP = L-seryl-tRNA(Sec) + AMP + diphosphate + H(+). It participates in aminoacyl-tRNA biosynthesis; selenocysteinyl-tRNA(Sec) biosynthesis; L-seryl-tRNA(Sec) from L-serine and tRNA(Sec): step 1/1. Catalyzes the attachment of serine to tRNA(Ser). Is also able to aminoacylate tRNA(Sec) with serine, to form the misacylated tRNA L-seryl-tRNA(Sec), which will be further converted into selenocysteinyl-tRNA(Sec). This Bacillus pumilus (strain SAFR-032) protein is Serine--tRNA ligase.